We begin with the raw amino-acid sequence, 96 residues long: Fruit-specific protein (96 aa).

3 disulfide bridges follow: Cys-59-Cys-75, Cys-63-Cys-78, and Cys-69-Cys-92.

In terms of tissue distribution, fruit specific.

The sequence is that of Fruit-specific protein (2A11) from Solanum lycopersicum (Tomato).